A 271-amino-acid chain; its full sequence is 4-diphosphocytidyl-2-C-methyl-D-erythritol kinase (271 aa).

Residue K17 is part of the active site. P97 to S107 serves as a coordination point for ATP. D137 is an active-site residue.

Belongs to the GHMP kinase family. IspE subfamily.

It carries out the reaction 4-CDP-2-C-methyl-D-erythritol + ATP = 4-CDP-2-C-methyl-D-erythritol 2-phosphate + ADP + H(+). It functions in the pathway isoprenoid biosynthesis; isopentenyl diphosphate biosynthesis via DXP pathway; isopentenyl diphosphate from 1-deoxy-D-xylulose 5-phosphate: step 3/6. Functionally, catalyzes the phosphorylation of the position 2 hydroxy group of 4-diphosphocytidyl-2C-methyl-D-erythritol. The polypeptide is 4-diphosphocytidyl-2-C-methyl-D-erythritol kinase (Thermotoga maritima (strain ATCC 43589 / DSM 3109 / JCM 10099 / NBRC 100826 / MSB8)).